The primary structure comprises 906 residues: Putative disease resistance protein At1g59780 (906 aa).

Positions 20-59 (KLLSQEYERFQGVEEQITELRDDLKMLMAFLSDADAKKQT) form a coiled coil. The region spanning 138–452 (SHAQLERKRE…AEGITYPGNY (315 aa)) is the NB-ARC domain. ATP is bound at residue 187 to 194 (GLGGLGKT). 4 LRR repeats span residues 572-597 (LPLL…IGKL), 599-619 (HLKY…SLRN), 620-644 (LKSL…VFKE), and 825-850 (MPLL…RFIS).

It belongs to the disease resistance NB-LRR family.

Potential disease resistance protein. The sequence is that of Putative disease resistance protein At1g59780 from Arabidopsis thaliana (Mouse-ear cress).